A 541-amino-acid chain; its full sequence is Chaperonin GroEL 1 (541 aa).

Residues 29 to 32, 86 to 90, Gly-413, and Asp-492 contribute to the ATP site; these read TLGP and DGTTT.

It belongs to the chaperonin (HSP60) family. As to quaternary structure, forms a cylinder of 14 subunits composed of two heptameric rings stacked back-to-back. Interacts with the co-chaperonin GroES.

It localises to the cytoplasm. The enzyme catalyses ATP + H2O + a folded polypeptide = ADP + phosphate + an unfolded polypeptide.. Together with its co-chaperonin GroES, plays an essential role in assisting protein folding. The GroEL-GroES system forms a nano-cage that allows encapsulation of the non-native substrate proteins and provides a physical environment optimized to promote and accelerate protein folding. This chain is Chaperonin GroEL 1, found in Rhodococcus jostii (strain RHA1).